A 962-amino-acid polypeptide reads, in one-letter code: Atromentin synthetase nps3 (962 aa).

Residues 55–469 (FISSSAHDSS…SGRIKDTVIV (415 aa)) form an adenylation (A) domain region. Residues 601 to 679 (VPATITETAF…DLAKYIDALV (79 aa)) form the Carrier domain. The interval 606 to 676 (TETAFAKIFA…VLRDLAKYID (71 aa)) is thiolation and peptide carrier (T) domain. Ser-638 bears the O-(pantetheine 4'-phosphoryl)serine mark. The interval 702–805 (PIFFVHPGVG…VGLINIPPHI (104 aa)) is thioesterase (TE) domain.

The protein belongs to the ATP-dependent AMP-binding enzyme family.

It participates in secondary metabolite biosynthesis. An L-tyrosine:2-oxoglutarate aminotransferase (probably amt1) and atromentin synthetase nps3 catalyze consecutive steps to turn over L-tyrosine into atromentin, which represents the generic precursor molecule for the entire terphenylquinone and pulvinic acid family of pigments, which are widely distributed secondary metabolites in homobasidiomycetes. The first step catalyzed by the aminotransferase converts L-tyrosine in to 4-hydroxyphenylpyruvate (4-HPP). Adenylation of two 4-HPP monomers by the nps3 adenylation (A) domain, covalent tethering of the monomers as a thioester and oxoester onto the nps3 thiolation (T) and thioesterase (TE) domains, respectively, and symmetric C-C-bond formation between two monomers catalyzed by the nps3 TE domain leads to atromentin. Follow-up products of atromentin in S.lacrymans include atromentic acid, xerocomic acid, isoxerocomic acid and variegatic acid. The sequence is that of Atromentin synthetase nps3 (nps3) from Serpula lacrymans var. lacrymans (strain S7.9) (Dry rot fungus).